A 133-amino-acid polypeptide reads, in one-letter code: Fatty acid-binding protein, heart (133 aa).

Residue Ala-2 is modified to N-acetylalanine. A Phosphothreonine modification is found at Thr-8. Position 20 is a phosphotyrosine; by Tyr-kinases (Tyr-20). Ser-23 carries the phosphoserine modification. Thr-30 is modified (phosphothreonine). Residue Ser-83 is modified to Phosphoserine. 127 to 129 (RTY) is a (9Z)-octadecenoate binding site. Residue 127 to 129 (RTY) coordinates hexadecanoate. Position 127 to 129 (127 to 129 (RTY)) interacts with octadecanoate.

As to expression, heart, but also skeletal muscle, kidney, brain and mammary gland.

It is found in the cytoplasm. Its function is as follows. FABPs are thought to play a role in the intracellular transport of long-chain fatty acids and their acyl-CoA esters. The protein is Fatty acid-binding protein, heart (Fabp3) of Rattus norvegicus (Rat).